The chain runs to 282 residues: S-formylglutathione hydrolase (282 aa).

An N6-succinyllysine modification is found at lysine 4. Serine 149 functions as the Charge relay system in the catalytic mechanism. Lysine 200 is modified (N6-acetyllysine). Residues aspartate 226 and histidine 260 each act as charge relay system in the active site.

It belongs to the esterase D family. Homodimer.

It localises to the cytoplasm. The protein resides in the cytoplasmic vesicle. The catalysed reaction is S-formylglutathione + H2O = formate + glutathione + H(+). Serine hydrolase involved in the detoxification of formaldehyde. In Rattus norvegicus (Rat), this protein is S-formylglutathione hydrolase (Esd).